Reading from the N-terminus, the 336-residue chain is Atypical chemokine receptor 1 (336 aa).

The Extracellular portion of the chain corresponds to 1 to 63 (MGNCLHQAEL…CSLLNDSSLP (63 aa)). 4 N-linked (GlcNAc...) asparagine glycosylation sites follow: asparagine 16, asparagine 27, asparagine 33, and asparagine 58. Disulfide bonds link cysteine 51/cysteine 276 and cysteine 129/cysteine 195. A helical membrane pass occupies residues 64–84 (FFILASDLGILASSTVLFMLF). The Cytoplasmic segment spans residues 85–95 (RPLFRWQLCPG). Residues 96–116 (WPVLAQLAVGSALFSIVVPIL) traverse the membrane as a helical segment. Topologically, residues 117-129 (APGLGNTHSSALC) are extracellular. The chain crosses the membrane as a helical span at residues 130-153 (SLGYCVWYGSAFAQALLLGCHASL). Topologically, residues 154-166 (GPKLGAGQVPGLT) are cytoplasmic. Residues 167–187 (LGLPVGLWGATALLTLPITLA) traverse the membrane as a helical segment. Topologically, residues 188-207 (SGASDGLCTPIYSTELEALQ) are extracellular. Residues 208 to 228 (ATHAVACFAIFVLLPLGLFGA) form a helical membrane-spanning segment. The Cytoplasmic segment spans residues 229 to 244 (KGLKKALGMGPGPWMN). A helical membrane pass occupies residues 245 to 265 (ILWVWFIFWWPHGLVLGLDFL). Residues 266-287 (VGSKLSLLPTCLAQQVLDLLLN) are Extracellular-facing. The chain crosses the membrane as a helical span at residues 288-308 (LAEALAIVHCVATPLLLALFC). Topologically, residues 309–336 (HQTTRTLLPSLPLPERWSSPVDTLGSKS) are cytoplasmic.

Belongs to the G-protein coupled receptor 1 family. Atypical chemokine receptor subfamily.

It localises to the early endosome. Its subcellular location is the recycling endosome. The protein localises to the membrane. Atypical chemokine receptor that controls chemokine levels and localization via high-affinity chemokine binding that is uncoupled from classic ligand-driven signal transduction cascades, resulting instead in chemokine sequestration, degradation, or transcytosis. Also known as interceptor (internalizing receptor) or chemokine-scavenging receptor or chemokine decoy receptor. Has a promiscuous chemokine-binding profile, interacting with inflammatory chemokines of both the CXC and the CC subfamilies but not with homeostatic chemokines. Acts as a receptor for chemokines including CCL2, CCL5, CCL7, CCL11, CCL13, CCL14, CCL17, CXCL5, CXCL6, IL8/CXCL8, CXCL11, GRO, RANTES, MCP-1 and TARC. May regulate chemokine bioavailability and, consequently, leukocyte recruitment through two distinct mechanisms: when expressed in endothelial cells, it sustains the abluminal to luminal transcytosis of tissue-derived chemokines and their subsequent presentation to circulating leukocytes; when expressed in erythrocytes, serves as blood reservoir of cognate chemokines but also as a chemokine sink, buffering potential surges in plasma chemokine levels. This Saimiri boliviensis boliviensis (Bolivian squirrel monkey) protein is Atypical chemokine receptor 1 (ACKR1).